The primary structure comprises 261 residues: Probable septum site-determining protein MinC (261 aa).

Belongs to the MinC family. Interacts with MinD and FtsZ.

Functionally, cell division inhibitor that blocks the formation of polar Z ring septums. Rapidly oscillates between the poles of the cell to destabilize FtsZ filaments that have formed before they mature into polar Z rings. Prevents FtsZ polymerization. The sequence is that of Probable septum site-determining protein MinC from Burkholderia cenocepacia (strain ATCC BAA-245 / DSM 16553 / LMG 16656 / NCTC 13227 / J2315 / CF5610) (Burkholderia cepacia (strain J2315)).